A 551-amino-acid chain; its full sequence is Probable metalloreductase AIM14 (551 aa).

7 helical membrane-spanning segments follow: residues 25 to 45 (GIII…VKFI), 67 to 87 (PTWM…GANI), 100 to 117 (RYGR…YLIL), 138 to 155 (KWLS…AIGY), 172 to 192 (FLNF…IVSI), 199 to 221 (YYSL…IIFH), and 225 to 247 (GVTI…LRFY). Residues 102 to 217 (GRIAYCLLPL…NITAWSMVVL (116 aa)) form the Ferric oxidoreductase domain. The FAD-binding FR-type domain occupies 247–369 (YKSYPVNNLK…GGSGISFGLP (123 aa)). Residues 440-492 (QDESHAKVEQTQGEEEVDGLLNQDENGIPLQSMKKESFPKKEEGEDEEKSSKD) are disordered. Basic and acidic residues predominate over residues 472–492 (MKKESFPKKEEGEDEEKSSKD).

This sequence belongs to the ferric reductase (FRE) family. AIM14 subfamily.

It is found in the membrane. In terms of biological role, probable cell surface metalloreductase. May be involved in iron or copper homeostasis. This is Probable metalloreductase AIM14 (AIM14) from Candida tropicalis (strain ATCC MYA-3404 / T1) (Yeast).